A 224-amino-acid polypeptide reads, in one-letter code: Ribosomal RNA large subunit methyltransferase E (224 aa).

Residues G60, W62, D93, D109, and D137 each contribute to the S-adenosyl-L-methionine site. Catalysis depends on K177, which acts as the Proton acceptor.

It belongs to the class I-like SAM-binding methyltransferase superfamily. RNA methyltransferase RlmE family.

Its subcellular location is the cytoplasm. It carries out the reaction uridine(2552) in 23S rRNA + S-adenosyl-L-methionine = 2'-O-methyluridine(2552) in 23S rRNA + S-adenosyl-L-homocysteine + H(+). Specifically methylates the uridine in position 2552 of 23S rRNA at the 2'-O position of the ribose in the fully assembled 50S ribosomal subunit. In Polynucleobacter asymbioticus (strain DSM 18221 / CIP 109841 / QLW-P1DMWA-1) (Polynucleobacter necessarius subsp. asymbioticus), this protein is Ribosomal RNA large subunit methyltransferase E.